The primary structure comprises 299 residues: Kruppel-like factor 2 (299 aa).

Disordered stretches follow at residues 19 to 38 (YQNA…SHHH) and 146 to 189 (YSFS…RRDK). The span at 23 to 38 (HHQHHQQHYHQQSHHH) shows a compositional bias: basic residues. Residues 153–180 (SGKDEEDPRIPLKDRGRVYHPQSTEKPK) are compositionally biased toward basic and acidic residues. 3 consecutive C2H2-type zinc fingers follow at residues 198-222 (HKCF…ERVH), 228-252 (YPCE…YRKH), and 258-280 (FACK…MKRH).

Belongs to the krueppel C2H2-type zinc-finger protein family. As to expression, expressed predominantly in intestine.

The protein resides in the nucleus. Functionally, probable transcription factor which regulates lipid metabolism. This Caenorhabditis elegans protein is Kruppel-like factor 2.